The primary structure comprises 4008 residues: Extracellular matrix organizing protein FRAS1 (4008 aa).

The first 26 residues, 1–26 (MGVLKVWLGLALALAEFAVLPHHSEG), serve as a signal peptide directing secretion. 5 VWFC domains span residues 27 to 88 (ACVY…PECV), 93 to 153 (GSCH…PVCV), 157 to 217 (KPCS…PQCS), 219 to 279 (RSCS…EECV), and 283 to 343 (GSCS…PECI). Topologically, residues 27-3901 (ACVYQDSLLA…AASLSQTGAS (3875 aa)) are extracellular. Serine 344 bears the Phosphoserine mark. The 71-residue stretch at 347 to 417 (GYCVYEETGE…VKGQCCPDCT (71 aa)) folds into the VWFC 6 domain. The N-linked (GlcNAc...) asparagine glycan is linked to asparagine 361. FU repeat units lie at residues 409–460 (KGQC…GFYQ), 462–505 (GSLC…GFYQ), 507–553 (RHSC…GFYN), 555–599 (QGTC…GYYA), 602–647 (TGRC…GFYS), 649–705 (HGVC…HFYL), 708–753 (TGIC…GYFH), 755–800 (EGSC…EQFL), 803–852 (VGYC…GYYA), 854–900 (RGAC…GHYL), 903–948 (NHVC…QYYL), 952–997 (TNTC…SFYQ), 999–1042 (SGLC…GYFA), and 1046–1089 (KHKC…GFSV). The N-linked (GlcNAc...) asparagine glycan is linked to asparagine 728. N-linked (GlcNAc...) asparagine glycosylation is found at asparagine 1093 and asparagine 1108. CSPG repeat units follow at residues 1102–1197 (TPSL…LKIS), 1217–1308 (APYV…LQAN), 1329–1438 (GLQL…FEVS), 1463–1559 (APKV…FSFA), 1595–1689 (PVFQ…ISVT), 1710–1810 (GPRL…FSVS), and 1833–1936 (PPVI…FYVS). An N-linked (GlcNAc...) asparagine glycan is attached at asparagine 1504. Asparagine 1777 is a glycosylation site (N-linked (GlcNAc...) asparagine). 2 N-linked (GlcNAc...) asparagine glycosylation sites follow: asparagine 1948 and asparagine 1978. CSPG repeat units follow at residues 1957-2057 (EPPR…FSLT), 2078-2177 (TPHL…FDVV), 2199-2291 (PPVI…FTLS), 2311-2404 (SLPV…FTVS), and 2439-2536 (TPRI…FLVK). Calx-beta domains are found at residues 2543–2646 (VSDN…VELS), 2659–2770 (AKVI…IALA), 2784–2890 (AKVL…VFLS), 2905–3007 (IAIN…VYLG), and 3025–3129 (ATIT…LVLG). Residues asparagine 2563, asparagine 2664, and asparagine 2682 are each glycosylated (N-linked (GlcNAc...) asparagine). N-linked (GlcNAc...) asparagine glycosylation is found at asparagine 2908, asparagine 2985, asparagine 3070, asparagine 3218, asparagine 3676, and asparagine 3875. The helical transmembrane segment at 3902–3922 (IGSALAAIMLLLLVFLVACFI) threads the bilayer. Topologically, residues 3923-4008 (NRKCQKQRKK…HNNLQDGTEV (86 aa)) are cytoplasmic.

This sequence belongs to the FRAS1 family. As to expression, expressed in many adult tissues, with highest levels in kidney, pancreas and thalamus. Relatively high expression was also detected in fetal kidney and heart.

It is found in the cell membrane. In terms of biological role, involved in extracellular matrix organization. Required for the regulation of epidermal-basement membrane adhesion responsible for proper organogenesis during embryonic development. Involved in brain organization and function. The protein is Extracellular matrix organizing protein FRAS1 of Homo sapiens (Human).